Here is a 324-residue protein sequence, read N- to C-terminus: Beta-ketoacyl-[acyl-carrier-protein] synthase III (324 aa).

Residues Cys112 and His249 contribute to the active site. The interval 250–254 (QANRR) is ACP-binding. Residue Asn279 is part of the active site.

This sequence belongs to the thiolase-like superfamily. FabH family. As to quaternary structure, homodimer.

Its subcellular location is the cytoplasm. The catalysed reaction is malonyl-[ACP] + acetyl-CoA + H(+) = 3-oxobutanoyl-[ACP] + CO2 + CoA. Its pathway is lipid metabolism; fatty acid biosynthesis. Catalyzes the condensation reaction of fatty acid synthesis by the addition to an acyl acceptor of two carbons from malonyl-ACP. Catalyzes the first condensation reaction which initiates fatty acid synthesis and may therefore play a role in governing the total rate of fatty acid production. Possesses both acetoacetyl-ACP synthase and acetyl transacylase activities. Its substrate specificity determines the biosynthesis of branched-chain and/or straight-chain of fatty acids. The protein is Beta-ketoacyl-[acyl-carrier-protein] synthase III of Streptococcus pyogenes serotype M1.